Here is a 305-residue protein sequence, read N- to C-terminus: Peroxidase A2 (305 aa).

Residue glutamine 1 is modified to Pyrrolidone carboxylic acid. 2 N-linked (GlcNAc...) asparagine glycosylation sites follow: asparagine 3 and asparagine 13. 4 disulfides stabilise this stretch: cysteine 11–cysteine 91, cysteine 44–cysteine 49, cysteine 97–cysteine 299, and cysteine 176–cysteine 208. Catalysis depends on histidine 42, which acts as the Proton acceptor. Positions 43, 46, 48, 50, and 52 each coordinate Ca(2+). Residue proline 139 participates in substrate binding. Asparagine 147 is a glycosylation site (N-linked (GlcNAc...) asparagine). Residue histidine 169 participates in heme b binding. Threonine 170 contacts Ca(2+). 3 N-linked (GlcNAc...) asparagine glycosylation sites follow: asparagine 185, asparagine 197, and asparagine 211. Residues aspartate 221, threonine 224, and aspartate 229 each contribute to the Ca(2+) site. Asparagine 267 is a glycosylation site (N-linked (GlcNAc...) asparagine).

This sequence belongs to the peroxidase family. Classical plant (class III) peroxidase subfamily. Ca(2+) is required as a cofactor. It depends on heme b as a cofactor.

The catalysed reaction is 2 a phenolic donor + H2O2 = 2 a phenolic radical donor + 2 H2O. Its function is as follows. Removal of H(2)O(2), oxidation of toxic reductants, biosynthesis and degradation of lignin, suberization, auxin catabolism, response to environmental stresses such as wounding, pathogen attack and oxidative stress. These functions might be dependent on each isozyme/isoform in each plant tissue. The polypeptide is Peroxidase A2 (HRPA2) (Armoracia rusticana (Horseradish)).